The following is a 532-amino-acid chain: E3 ubiquitin-protein ligase ICP0 (532 aa).

8 residues coordinate Zn(2+): cysteine 8, cysteine 11, cysteine 24, histidine 26, cysteine 29, cysteine 32, cysteine 43, and cysteine 46. The RING-type zinc finger occupies 8 to 47; the sequence is CPICLEDPSNYSMALPCLHAFCYVCITRWIRQNPTCPLCK. 4 disordered regions span residues 206 to 391, 406 to 426, 461 to 498, and 510 to 532; these read EYID…PMRP, APRDSSTSEAAGPSRLGAGPR, EDESARRRGNVLLRPRRQSVPPVPYPDIASTSPLIRQG, and QTQPAEPEEMRCPHNCQRYRRNQ. Acidic residues-rich tracts occupy residues 217–227 and 234–243; these read SEEETDSDIEV and DPEDTSDETS. The segment covering 286 to 295 has biased composition (basic residues); that stretch reads RSARLRRRQP.

Post-translationally, auto-ubiquitinated.

The catalysed reaction is S-ubiquitinyl-[E2 ubiquitin-conjugating enzyme]-L-cysteine + [acceptor protein]-L-lysine = [E2 ubiquitin-conjugating enzyme]-L-cysteine + N(6)-ubiquitinyl-[acceptor protein]-L-lysine.. Evades nuclear antiviral defenses triggered by dsDNA viruses. Acts during the initial stages of lytic infection and the reactivation of latent viral genome. Prevents the antiviral effect of nuclear bodies by degrading host PML and SP100. This chain is E3 ubiquitin-protein ligase ICP0 (63), found in Equus caballus (Horse).